A 172-amino-acid polypeptide reads, in one-letter code: Austinoid biosynthesis clusters protein J (172 aa).

This sequence belongs to the trt14 isomerase family. In terms of assembly, homodimer.

It participates in secondary metabolite biosynthesis; terpenoid biosynthesis. In terms of biological role, part of the gene cluster B that mediates the biosynthesis of the fungal meroterpenoid acetoxydehydroaustin. The first step of the pathway is the synthesis of 3,5-dimethylorsellinic acid by the polyketide synthase ausA. 3,5-dimethylorsellinic acid is then prenylated by the polyprenyl transferase ausN. Further epoxidation by the FAD-dependent monooxygenase ausM and cyclization by the probable terpene cyclase ausL lead to the formation of protoaustinoid A. Protoaustinoid A is then oxidized to spiro-lactone preaustinoid A3 by the combined action of the FAD-binding monooxygenases ausB and ausC, and the dioxygenase ausE. Acid-catalyzed keto-rearrangement and ring contraction of the tetraketide portion of preaustinoid A3 by ausJ lead to the formation of preaustinoid A4. The aldo-keto reductase ausK, with the help of ausH, is involved in the next step by transforming preaustinoid A4 into isoaustinone which is in turn hydroxylated by the P450 monooxygenase ausI to form austinolide. The cytochrome P450 monooxygenase ausG then modifies austinolide to austinol. Austinol is further acetylated to austin by the O-acetyltransferase ausP, which spontaneously changes to dehydroaustin. The cytochrome P450 monooxygenase then converts dehydroaustin is into 7-dehydrodehydroaustin. The hydroxylation catalyzed by ausR permits the second O-acetyltransferase ausQ to add an additional acetyl group to the molecule, leading to the formation of acetoxydehydroaustin. Due to genetic rearrangements of the clusters and the subsequent loss of some enzymes, the end product of the Penicillium brasilianum austinoid biosynthesis clusters is acetoxydehydroaustin. The chain is Austinoid biosynthesis clusters protein J from Penicillium brasilianum.